Here is a 296-residue protein sequence, read N- to C-terminus: GTPase Era (296 aa).

In terms of domain architecture, Era-type G spans lysine 3 to glutamate 170. The tract at residues glycine 11–serine 18 is G1. A GTP-binding site is contributed by glycine 11–serine 18. The tract at residues glutamine 37–asparagine 41 is G2. The segment at aspartate 58–glycine 61 is G3. GTP contacts are provided by residues aspartate 58–isoleucine 62 and asparagine 120–aspartate 123. Residues asparagine 120–aspartate 123 are G4. Positions isoleucine 149 to alanine 151 are G5. The 78-residue stretch at leucine 201 to glutamate 278 folds into the KH type-2 domain.

The protein belongs to the TRAFAC class TrmE-Era-EngA-EngB-Septin-like GTPase superfamily. Era GTPase family. Monomer.

The protein resides in the cytoplasm. It is found in the cell membrane. In terms of biological role, an essential GTPase that binds both GDP and GTP, with rapid nucleotide exchange. Plays a role in 16S rRNA processing and 30S ribosomal subunit biogenesis and possibly also in cell cycle regulation and energy metabolism. This chain is GTPase Era, found in Clostridium botulinum (strain Kyoto / Type A2).